The chain runs to 275 residues: NH(3)-dependent NAD(+) synthetase (275 aa).

ATP is bound at residue 50-57 (GISGGVDS). D56 contacts Mg(2+). R147 contributes to the deamido-NAD(+) binding site. An ATP-binding site is contributed by T167. A Mg(2+)-binding site is contributed by E172. 2 residues coordinate deamido-NAD(+): K180 and D187. K196 and T218 together coordinate ATP. 267–268 (HK) is a binding site for deamido-NAD(+).

It belongs to the NAD synthetase family. In terms of assembly, homodimer.

It catalyses the reaction deamido-NAD(+) + NH4(+) + ATP = AMP + diphosphate + NAD(+) + H(+). It functions in the pathway cofactor biosynthesis; NAD(+) biosynthesis; NAD(+) from deamido-NAD(+) (ammonia route): step 1/1. Functionally, catalyzes the ATP-dependent amidation of deamido-NAD to form NAD. Uses ammonia as a nitrogen source. This chain is NH(3)-dependent NAD(+) synthetase, found in Pseudomonas fluorescens (strain Pf0-1).